A 904-amino-acid chain; its full sequence is Polycystin-2 (904 aa).

Residues 1–102 (MSSSRVRPQA…SSSGGVPGNF (102 aa)) form a disordered region. Over 1–155 (MSSSRVRPQA…NSNREMYLKT (155 aa)) the chain is Cytoplasmic. Low complexity predominate over residues 8-20 (PQAPQSPAASASA). Over residues 26–38 (EGIEMEKMHHEEV) the composition is skewed to basic and acidic residues. Over residues 86–96 (SVSTTSSSSSG) the composition is skewed to low complexity. The chain crosses the membrane as a helical span at residues 156-177 (VLREMITYILFLLTLCIITYGM). At 178-404 (VSTNMYYYTK…TVRLLRYVSS (227 aa)) the chain is on the extracellular side. Asparagine 235, asparagine 241, and asparagine 264 each carry an N-linked (GlcNAc...) asparagine glycan. A disulfide bridge connects residues cysteine 267 and cysteine 280. An N-linked (GlcNAc...) asparagine glycan is attached at asparagine 298. A helical membrane pass occupies residues 405–425 (WDYFVGMCEVSFCLFVLYYLV). The Cytoplasmic portion of the chain corresponds to 426–441 (EEALEIRLHRLRYFKS). A helical membrane pass occupies residues 442–462 (LWNCLDVLIVALSVPAIIMNI). The Extracellular segment spans residues 463–489 (CRTSAVSHRLHFLLENHSTYPNFEPLA). The N-linked (GlcNAc...) asparagine glycan is linked to asparagine 478. Residues 490-510 (RLQVHFNNLAAIIVFLSWVKL) traverse the membrane as a helical segment. The Cytoplasmic segment spans residues 511-534 (FKFINFNKTMNQLSTTMSRCAKDL). Residues 535 to 556 (MGFAIMFFIVFLAYAQLAYLVF) traverse the membrane as a helical segment. At 557 to 568 (GTQVNDFSTFQA) the chain is on the extracellular side. The pore-forming intramembrane region spans 569–583 (CIFTQFRIILGDFDF). Leucine 578 provides a ligand contact to Ca(2+). Positions 578-580 (LGD) match the Selectivity filter motif. The Extracellular segment spans residues 584-591 (SEIEEADS). A helical transmembrane segment spans residues 592-612 (VLGPIYFTTFVFFIFMILLNM). The Cytoplasmic portion of the chain corresponds to 613 to 904 (FLAIINDTYS…DAAASGPAHL (292 aa)). In terms of domain architecture, EF-hand 1 spans 687–722 (HSDAEIEAIFAKYDLDGDQELTEHEHQQMRDDLEKE). Aspartate 700, aspartate 702, aspartate 704, glutamate 706, and glutamate 711 together coordinate Ca(2+). Positions 708–732 (TEHEHQQMRDDLEKEREDLDLEHSS) are enriched in basic and acidic residues. Disordered stretches follow at residues 708–770 (TEHE…SSGG) and 854–904 (ESDD…PAHL). The segment at 740-759 (RSFSRSQDDSEEDDDEDSGH) is linker. In terms of domain architecture, EF-hand 2 spans 768–786 (SGGVSYEEFQVLVRRVDRM). Residues 770–809 (GVSYEEFQVLVRRVDRMEHSIGSIVSKIDAVIVKLEAMER) are a coiled coil. The span at 878-890 (LRPRSSRPPSSLS) shows a compositional bias: low complexity.

The protein belongs to the polycystin family. In terms of assembly, homotetramer. Component of the heterotetrameric polycystin channel complex with pkd1; the tetramer contains one pkd1 chain and three pkd2 chains. Interacts with pkd1l1. Phosphorylated. Phosphorylation is important for protein function; a mutant human construct that lacks the N-terminal phosphorylation sites cannot complement a zebrafish pkd2-deficient mutant. In terms of processing, N-glycosylated. The four subunits in a tetramer probably differ in the extent of glycosylation; simultaneous glycosylation of all experimentally validated sites would probably create steric hindrance. Post-translationally, sumoylated by SUMO1; sumoylation regulates PKD2 membrane recycling. Detected along cilia and at the cilium basal body in Kupffer's vesicle at the 10 somite stage. Detected in heart at 48hpf. Detected in muscle and pronephric kidney at 48 hpf. Detected on trunk muscle sarcolemma and sarcomere, on ependymal cell cilia in brain, at the apical cell membrane in epithelial cells in the ear, at the lateral line organ and olfactory placode at 56 hpf. Detected in adult kidney (at protein level).

The protein resides in the basolateral cell membrane. The protein localises to the cell membrane. Its subcellular location is the sarcolemma. It localises to the cytoplasm. It is found in the myofibril. The protein resides in the sarcomere. The protein localises to the sarcoplasmic reticulum membrane. Its subcellular location is the apical cell membrane. It localises to the endoplasmic reticulum membrane. It is found in the cell projection. The protein resides in the cilium. The protein localises to the cytoskeleton. Its subcellular location is the cilium basal body. It localises to the cytoplasmic vesicle membrane. The enzyme catalyses K(+)(in) = K(+)(out). The catalysed reaction is Na(+)(in) = Na(+)(out). It catalyses the reaction Ca(2+)(in) = Ca(2+)(out). Its activity is regulated as follows. Channel activity is regulated by phosphorylation. Channel activity is regulated by intracellular Ca(2+). Functionally, forms a nonselective cation channel. Can function as a homotetrameric ion channel or can form heteromer with PKD1. Displays distinct function depending on its subcellular localization and regulation by its binding partners. In the primary cilium functions as a cation channel, with a preference for monovalent cations over divalent cations that allows K(+), Na(+) and Ca(2+) influx, with low selectivity for Ca(2+). In the endoplasmic reticulum, likely functions as a K(+) channel to facilitate Ca(2+) release. Required for normal oscillation of Ca(2+) levels within cilia; these oscillations of the intraciliary Ca(2+) levels can trigger cytoplasmic Ca(2+) signaling cascades. Required for normal temporal variation of the intracellular Ca(2+) levels in the heart. Plays a role in fluid-flow mechanosensation. Required for normal specification of the body left-right axis during embryogenesis, most likely via its role in ciliary Ca(2+) oscillations in Kupffer's vesicle. This Danio rerio (Zebrafish) protein is Polycystin-2.